A 591-amino-acid chain; its full sequence is UvrABC system protein C (591 aa).

Residues 14-91 enclose the GIY-YIG domain; sequence DSPGCYLHKD…IQKNMPKYNI (78 aa). In terms of domain architecture, UVR spans 196–231; the sequence is DKIVTGLKEKMLAASQAMEFERAAEYRDLISGIATL.

It belongs to the UvrC family. Interacts with UvrB in an incision complex.

Its subcellular location is the cytoplasm. In terms of biological role, the UvrABC repair system catalyzes the recognition and processing of DNA lesions. UvrC both incises the 5' and 3' sides of the lesion. The N-terminal half is responsible for the 3' incision and the C-terminal half is responsible for the 5' incision. This is UvrABC system protein C from Streptococcus uberis (strain ATCC BAA-854 / 0140J).